A 483-amino-acid chain; its full sequence is ATP-dependent RNA helicase DDX25 (483 aa).

Position 49 is a phosphothreonine (Thr-49). Positions 61-74 (LAANSLLNKLIRQS) match the Nuclear export signal motif. Positions 97–125 (KTFEELRLKEELLKGIYAMGFNRPSKIQE) match the Q motif motif. A Nuclear localization signal motif is present at residues 100–114 (EELRLKEELLKGIYA). The region spanning 130–300 (MMLAHPPQNL…ERIIPDPNVI (171 aa)) is the Helicase ATP-binding domain. Residue 143-150 (SQSGTGKT) coordinates ATP. Residues 247–250 (DEAD) carry the DEAD box motif. A Helicase C-terminal domain is found at 311 to 478 (NIRQYYVLCE…QLDPEDMDEI (168 aa)).

Belongs to the DEAD box helicase family. Phosphorylated on threonine residues. The phosphorylated form is found in the cytoplasm but not in the nucleus. In terms of tissue distribution, isoform 1 is expressed in germ cells. Isoform 2 is highly expressed in Leydig cells and weakly expressed in the pituitary and hypothalamus. Isoform 3 is weakly expressed only in germ cells.

It localises to the cytoplasm. The protein localises to the nucleus. The catalysed reaction is ATP + H2O = ADP + phosphate + H(+). In terms of biological role, ATP-dependent RNA helicase. Required for mRNA export and translation regulation during spermatid development. The polypeptide is ATP-dependent RNA helicase DDX25 (Ddx25) (Rattus norvegicus (Rat)).